The following is a 1135-amino-acid chain: Integrin alpha-7 (1135 aa).

A signal peptide spans 1 to 33 (MARIPRCDFLGLPGICYLLSFLLAGLLLPRASA). Residues 34–1036 (FNLDVMGAIR…VAVVAEGVPW (1003 aa)) are Extracellular-facing. FG-GAP repeat units lie at residues 38–103 (VMGA…ETDC), 110–165 (RGAN…RCFV), 185–238 (EGRP…DPDQ), 248–305 (DRLT…ASRL), 306–367 (IPEV…HWAD), 368–423 (ISPL…GVVT), and 427–486 (QVLE…IDPR). Asn86 carries N-linked (GlcNAc...) asparagine glycosylation. 3 disulfides stabilise this stretch: Cys94–Cys103, Cys140–Cys163, and Cys184–Cys197. Ca(2+)-binding residues include Asp328, Asn330, Asp332, Asp336, Asp390, Asn392, Asp394, Asp398, Asp448, Asp450, Asn452, Tyr454, and Asp456. 6 disulfide bridges follow: Cys495/Cys502, Cys508/Cys571, Cys637/Cys643, Cys736/Cys747, Cys894/Cys948, and Cys955/Cys960. N-linked (GlcNAc...) asparagine glycosylation occurs at Asn741. A compositionally biased stretch (basic and acidic residues) spans 905–916 (VDSRDRRRRELG). Residues 905–933 (VDSRDRRRRELGQPEPQEPPEKVEPSTSW) form a disordered region. Asn943 is a glycosylation site (N-linked (GlcNAc...) asparagine). N-linked (GlcNAc...) asparagine glycans are attached at residues Asn979 and Asn999. Residues 1037 to 1057 (WVILLAVLAGLLVLALLVLLL) traverse the membrane as a helical segment. Residues 1058 to 1135 (WKLGFFKRAK…PDGHPVSVTA (78 aa)) are Cytoplasmic-facing. The short motif at 1061–1065 (GFFKR) is the GFFKR motif element. 3 consecutive repeat copies span residues 1111 to 1114 (DAHP), 1119 to 1122 (DWHP), and 1127 to 1130 (DGHP). A 3 X 4 AA repeats of D-X-H-P region spans residues 1111 to 1130 (DAHPILAADWHPELGPDGHP).

It belongs to the integrin alpha chain family. In terms of assembly, interacts (via C-terminus intracellular tail region) with CIB1; the interaction is stabilized/increased in a calcium- and magnesium-dependent manner. Heterodimer of an alpha and a beta subunit. The alpha subunit is composed of a heavy and a light chain linked by a disulfide bond. Alpha-7 associates with beta-1. Interacts with COMP. In terms of processing, ADP-ribosylated on at least two sites of the extracellular domain in skeletal myotubes. A 70 kDa form is created by proteolytic cleavage. Cleavage is elevated during myogenic differentiation and the cleaved form enhances cell adhesion and spreading on laminin. Expressed in skeletal and cardiac muscle. Expressed in replicating myoblasts. In differentiated muscle fibers localizes between fibers and the surrounding matrix. Isoform Alpha-7X1A and isoform Alpha-7X1B are expressed at myotendinous and neuromuscular junctions; isoform Alpha-7X1C is expressed at neuromuscular junctions and at extrasynaptic sites.

It localises to the membrane. Integrin alpha-7/beta-1 is the primary laminin receptor on skeletal myoblasts and adult myofibers. During myogenic differentiation, it may induce changes in the shape and mobility of myoblasts, and facilitate their localization at laminin-rich sites of secondary fiber formation. Involved in the maintenance of the myofibers cytoarchitecture as well as for their anchorage, viability and functional integrity. Required to promote contractile phenotype acquisition in differentiated airway smooth muscle (ASM) cells. Acts as a Schwann cell receptor for laminin-2. Acts as a receptor of COMP and mediates its effect on vascular smooth muscle cells (VSMCs) maturation. The polypeptide is Integrin alpha-7 (Itga7) (Rattus norvegicus (Rat)).